An 834-amino-acid chain; its full sequence is MSSELTRRNLLKAHAAGIAAATAGIALPAAAQPVPGGVSALQIKWSKAPCRFCGTGCGVMVGVKEGKVVATHGDMQAEVNRGLNCIKGYFLSKIMYGKDRLETPLLRKKNGVYAKDGEFEPVSWDEAFDVMAQQCKRVLKEKGPTAVGMFGSGQWTIFEGYAATKLMRAGFRSNNLDPNARHCMASAAYAFMRTFGMDEPMGCYDDFEHADAFVLWGSNMAEMHPILWTRIADRRLGFDHVRVAVLSTFTHRSMDLADIPMVFKPGTDLVILNYIANHIIKTGRVNEDFVRNHTKFVRGVTDIGYGLRPDDPVEVNAANSADPTKTEAIDFETFKEFVSEYTLEKTAAMTGVEAGFLEELAELYADPKRKVMSLWTMGFNQHVRGVWANQMVYNIHLLTGKISEPGNSPFSLTGQPSACGTAREVGTFAHRLPADMTVTNPEHRKHAEEIWRIPHGIIPEKPGYHAVQQDRMLHDGKLNFYWVQVNNNVQAGPNTKNETYLGYRNPENFIVVSDAYPTITAMSADLILPAAMWVEKEGAYGNAERRTHVWHQLVEASGEARSDLWQLVEFSKRFTTDEVWPAEILDANPAYRGKTLYEVLYKDSDVGKFPLSEINADYKNQESSDFGFYLQKGLFEEYAAFGRGHGHDLAPYDAYHEVRGMRWPVVDGKETLWRYREGYDPYVKPGEGVKFYGNKDGRAVIIAVPYEPPAESPDQEFDTWLVTGRVLEHWHSGSMTMRVPELYKAFPGARCFMNADDARKRGLNQGAEIRIVSRRGEIRSRVETRGRNRMPPGVIFVPWFDASQLINKVTLDATDPISKQTDFKKCAVKIEPVA.

The segment at residues 1–31 (MSSELTRRNLLKAHAAGIAAATAGIALPAAA) is a signal peptide (tat-type signal). Residues 43–99 (IKWSKAPCRFCGTGCGVMVGVKEGKVVATHGDMQAEVNRGLNCIKGYFLSKIMYGKD) enclose the 4Fe-4S Mo/W bis-MGD-type domain. [4Fe-4S] cluster contacts are provided by C50, C53, C57, and C85. Residues K87, Q154, N179, C183, 216-223 (WGSNMAEM), 247-251 (STFTH), 266-268 (GTD), M377, Q381, N487, 513-514 (SD), K536, D563, and 723-732 (TGRVLEHWHS) each bind Mo-bis(molybdopterin guanine dinucleotide). W799 provides a ligand contact to substrate. Mo-bis(molybdopterin guanine dinucleotide) is bound by residues N807 and K824.

This sequence belongs to the prokaryotic molybdopterin-containing oxidoreductase family. NasA/NapA/NarB subfamily. In terms of assembly, component of the periplasmic nitrate reductase NapAB complex composed of NapA and NapB. It depends on [4Fe-4S] cluster as a cofactor. The cofactor is Mo-bis(molybdopterin guanine dinucleotide). In terms of processing, predicted to be exported by the Tat system. The position of the signal peptide cleavage has not been experimentally proven.

Its subcellular location is the periplasm. The catalysed reaction is 2 Fe(II)-[cytochrome] + nitrate + 2 H(+) = 2 Fe(III)-[cytochrome] + nitrite + H2O. Functionally, catalytic subunit of the periplasmic nitrate reductase complex NapAB. Receives electrons from NapB and catalyzes the reduction of nitrate to nitrite. This Agrobacterium fabrum (strain C58 / ATCC 33970) (Agrobacterium tumefaciens (strain C58)) protein is Periplasmic nitrate reductase.